A 119-amino-acid chain; its full sequence is Large ribosomal subunit protein bL20 (119 aa).

This sequence belongs to the bacterial ribosomal protein bL20 family.

Its function is as follows. Binds directly to 23S ribosomal RNA and is necessary for the in vitro assembly process of the 50S ribosomal subunit. It is not involved in the protein synthesizing functions of that subunit. This Sorangium cellulosum (strain So ce56) (Polyangium cellulosum (strain So ce56)) protein is Large ribosomal subunit protein bL20.